Here is a 354-residue protein sequence, read N- to C-terminus: NADH-quinone oxidoreductase subunit H (354 aa).

Transmembrane regions (helical) follow at residues 23–43 (LVRA…LILW), 91–111 (YIIA…VVPF), 124–144 (LLYV…AGWA), 162–182 (ISYE…TGSL), 203–223 (ILSW…ISGV), 250–270 (GMAF…ISAM), 291–311 (IPGF…FIWL), and 330–350 (IFIP…VSPW).

The protein belongs to the complex I subunit 1 family. As to quaternary structure, NDH-1 is composed of 14 different subunits. Subunits NuoA, H, J, K, L, M, N constitute the membrane sector of the complex.

It localises to the cell inner membrane. The enzyme catalyses a quinone + NADH + 5 H(+)(in) = a quinol + NAD(+) + 4 H(+)(out). Functionally, NDH-1 shuttles electrons from NADH, via FMN and iron-sulfur (Fe-S) centers, to quinones in the respiratory chain. The immediate electron acceptor for the enzyme in this species is believed to be ubiquinone. Couples the redox reaction to proton translocation (for every two electrons transferred, four hydrogen ions are translocated across the cytoplasmic membrane), and thus conserves the redox energy in a proton gradient. This subunit may bind ubiquinone. The chain is NADH-quinone oxidoreductase subunit H from Ralstonia nicotianae (strain ATCC BAA-1114 / GMI1000) (Ralstonia solanacearum).